We begin with the raw amino-acid sequence, 206 residues long: Small ribosomal subunit protein uS4 (206 aa).

In terms of domain architecture, S4 RNA-binding spans 96 to 156; it reads SRLDNVVYRM…EKSKKQVRIA (61 aa).

This sequence belongs to the universal ribosomal protein uS4 family. As to quaternary structure, part of the 30S ribosomal subunit. Contacts protein S5. The interaction surface between S4 and S5 is involved in control of translational fidelity.

Functionally, one of the primary rRNA binding proteins, it binds directly to 16S rRNA where it nucleates assembly of the body of the 30S subunit. With S5 and S12 plays an important role in translational accuracy. The protein is Small ribosomal subunit protein uS4 of Laribacter hongkongensis (strain HLHK9).